Here is a 109-residue protein sequence, read N- to C-terminus: Sperm-specific class P protein 19 (109 aa).

In terms of domain architecture, MSP spans 1–109 (MSLTADPPAC…TVTIPMSATA (109 aa)).

In terms of assembly, monomer. Expressed at higher level in testis.

This is Sperm-specific class P protein 19 (ssp-19) from Caenorhabditis elegans.